Here is a 937-residue protein sequence, read N- to C-terminus: uncharacterized protein (937 aa).

Threonine 2 bears the N-acetylthreonine mark. Residues 281-937 are disordered; sequence NESPSSNINT…KKGKGKGGRK (657 aa). Residues 290-308 are compositionally biased toward low complexity; it reads TTTTSTTTTTTTTTSSPVV. The Charge relay system role is filled by threonine 292. Composition is skewed to basic and acidic residues over residues 309-402, 411-431, 469-489, 512-532, 600-615, 667-687, 738-758, and 780-872; these read EESK…EKQQ, AEKE…RLEA, AEKE…KLEA, and AEKE…KVEE. A coiled-coil region spans residues 345–802; the sequence is VDDSKEKEEK…KAAEETKVEE (458 aa). Positions 887 to 897 are enriched in acidic residues; that stretch reads EETEEGEEVDE. Positions 898 to 924 are enriched in low complexity; sequence ASNTTTEQTTTNANQPKKPNNNNNNNK. Positions 925–937 are enriched in basic residues; it reads GKGKKGKGKGGRK.

The protein belongs to the AB hydrolase superfamily.

This is an uncharacterized protein from Dictyostelium discoideum (Social amoeba).